The chain runs to 100 residues: Aspartyl/glutamyl-tRNA(Asn/Gln) amidotransferase subunit C (100 aa).

This sequence belongs to the GatC family. In terms of assembly, heterotrimer of A, B and C subunits.

It catalyses the reaction L-glutamyl-tRNA(Gln) + L-glutamine + ATP + H2O = L-glutaminyl-tRNA(Gln) + L-glutamate + ADP + phosphate + H(+). The catalysed reaction is L-aspartyl-tRNA(Asn) + L-glutamine + ATP + H2O = L-asparaginyl-tRNA(Asn) + L-glutamate + ADP + phosphate + 2 H(+). In terms of biological role, allows the formation of correctly charged Asn-tRNA(Asn) or Gln-tRNA(Gln) through the transamidation of misacylated Asp-tRNA(Asn) or Glu-tRNA(Gln) in organisms which lack either or both of asparaginyl-tRNA or glutaminyl-tRNA synthetases. The reaction takes place in the presence of glutamine and ATP through an activated phospho-Asp-tRNA(Asn) or phospho-Glu-tRNA(Gln). The chain is Aspartyl/glutamyl-tRNA(Asn/Gln) amidotransferase subunit C from Staphylococcus aureus (strain Newman).